The following is a 492-amino-acid chain: Zinc finger protein GLIS2 (492 aa).

Residues 49 to 101 (VITPICSSPPPGFRYRDGDSPPFSSPPIVDLSLSPPSGTDSPSRSSLSPDRAA) are disordered. Residues 69–129 (PPFSSPPIVD…SPFQFFLPLG (61 aa)) are transcription activation. The span at 82–97 (SPPSGTDSPSRSSLSP) shows a compositional bias: low complexity. The interval 138-161 (MFMSPPKENRLSLEFTEQKQLVCQ) is transcription repression. The C2H2-type 1 zinc-finger motif lies at 158-183 (LVCQWAKCNRLFELLQELVDHVNDFH). The C2H2-type 2; degenerate zinc finger occupies 192–219 (YCCHWEGCARRGRGFNARYKMLIHIRTH). C2H2-type zinc fingers lie at residues 225-247 (HCCP…NRSH), 253-277 (YMCP…TRTH), and 283-307 (YYCK…IKAH). Over residues 423-444 (VENEKRPKGQRGDSSERTDGSK) the composition is skewed to basic and acidic residues. Residues 423–450 (VENEKRPKGQRGDSSERTDGSKLRPGSI) are disordered.

This sequence belongs to the GLI C2H2-type zinc-finger protein family.

It localises to the nucleus speckle. It is found in the cytoplasm. Can act either as a transcription repressor or as a transcription activator, depending on the cell context. May be involved in neuron differentiation. This Xenopus laevis (African clawed frog) protein is Zinc finger protein GLIS2 (glis2).